Here is a 154-residue protein sequence, read N- to C-terminus: 6,7-dimethyl-8-ribityllumazine synthase (154 aa).

5-amino-6-(D-ribitylamino)uracil contacts are provided by residues Phe22, 56 to 58, and 80 to 82; these read AFE and TVI. (2S)-2-hydroxy-3-oxobutyl phosphate is bound at residue 85–86; that stretch reads ST. Residue His88 is the Proton donor of the active site. Phe113 contributes to the 5-amino-6-(D-ribitylamino)uracil binding site. Arg127 is a binding site for (2S)-2-hydroxy-3-oxobutyl phosphate.

The protein belongs to the DMRL synthase family.

It catalyses the reaction (2S)-2-hydroxy-3-oxobutyl phosphate + 5-amino-6-(D-ribitylamino)uracil = 6,7-dimethyl-8-(1-D-ribityl)lumazine + phosphate + 2 H2O + H(+). Its pathway is cofactor biosynthesis; riboflavin biosynthesis; riboflavin from 2-hydroxy-3-oxobutyl phosphate and 5-amino-6-(D-ribitylamino)uracil: step 1/2. Catalyzes the formation of 6,7-dimethyl-8-ribityllumazine by condensation of 5-amino-6-(D-ribitylamino)uracil with 3,4-dihydroxy-2-butanone 4-phosphate. This is the penultimate step in the biosynthesis of riboflavin. The protein is 6,7-dimethyl-8-ribityllumazine synthase of Lactococcus lactis subsp. cremoris (strain MG1363).